A 113-amino-acid polypeptide reads, in one-letter code: Large ribosomal subunit protein bL19 (113 aa).

The protein belongs to the bacterial ribosomal protein bL19 family.

Its function is as follows. This protein is located at the 30S-50S ribosomal subunit interface and may play a role in the structure and function of the aminoacyl-tRNA binding site. This chain is Large ribosomal subunit protein bL19, found in Rhodococcus erythropolis (strain PR4 / NBRC 100887).